The chain runs to 148 residues: MGRLISVSFGLLVVFLSLSGTGAALNCASGWSGYDQHCYKVFDKPKSWADAEKFCKKQTSGGHLVSFHSSEETDFVVKLVSQTLESQILWMGLSKVWNQCDWGWSNGAKLKYKAWAEESYCVYFSSTKKGWRSRACRLLGHFVCKSPA.

The N-terminal stretch at 1 to 24 is a signal peptide; the sequence is MGRLISVSFGLLVVFLSLSGTGAA. Cystine bridges form between Cys27/Cys38, Cys55/Cys144, and Cys121/Cys136. Residues 34-145 enclose the C-type lectin domain; sequence YDQHCYKVFD…CRLLGHFVCK (112 aa).

Belongs to the snaclec family. As to quaternary structure, heterodimer; disulfide-linked. In terms of tissue distribution, expressed by the venom gland.

The protein localises to the secreted. Its function is as follows. Interferes with one step of hemostasis (modulation of platelet aggregation, or coagulation cascade, for example). In Macrovipera lebetinus (Levantine viper), this protein is Snaclec B2.